The primary structure comprises 282 residues: TTTTPPSTPPLDDPATDPFLVARAAADHIAQATGVEGHDMALVLGSGWGGAAELLGEVVAEVPTHEIPGFSAPAVAGHLSVTRSIRVERADGSVRHALVLGSRTHLYEGKGVRAVVHGVRTAAATGAETLILTNGCGGLNQEWGAGTPVLLSDHINLTARSPLEGPTFVDLTDVYSPRLRELAHRVDPTLPEGVYAQFPGPHYETPAEVRMAGILGADLVGMSTTLEAIAARHCGLEVLGVSLVTNLAAGISPTPLSHAEVIEAGQAAGPRISALLADIAKR.

Phosphate-binding positions include Ser-46, His-78, and 103–105 (RTH). Glu-204 is a catalytic residue. Glu-204 contacts a purine D-ribonucleoside. Ser-223 provides a ligand contact to phosphate. Asn-246 contacts a purine D-ribonucleoside.

Belongs to the PNP/MTAP phosphorylase family. In terms of assembly, homotrimer.

The catalysed reaction is a purine 2'-deoxy-D-ribonucleoside + phosphate = a purine nucleobase + 2-deoxy-alpha-D-ribose 1-phosphate. Its pathway is purine metabolism; purine nucleoside salvage. In terms of biological role, the purine nucleoside phosphorylases catalyze the phosphorolytic breakdown of the N-glycosidic bond in the beta-(deoxy)ribonucleoside molecules, with the formation of the corresponding free purine bases and pentose-1-phosphate. Cleaves guanosine, inosine, 2'-deoxyguanosine and 2'-deoxyinosine. The sequence is that of Purine nucleoside phosphorylase (punA) from Cellulomonas sp.